The primary structure comprises 669 residues: DNA ligase (669 aa).

NAD(+) is bound by residues 35–39 (DSVYD), 84–85 (SL), and glutamate 116. Lysine 118 serves as the catalytic N6-AMP-lysine intermediate. Residues arginine 139, glutamate 176, lysine 291, and lysine 315 each coordinate NAD(+). The Zn(2+) site is built by cysteine 409, cysteine 412, cysteine 427, and cysteine 432. Positions 591-669 (TTKATLAGKT…EAQLLELIKA (79 aa)) constitute a BRCT domain.

This sequence belongs to the NAD-dependent DNA ligase family. LigA subfamily. Requires Mg(2+) as cofactor. Mn(2+) is required as a cofactor.

The catalysed reaction is NAD(+) + (deoxyribonucleotide)n-3'-hydroxyl + 5'-phospho-(deoxyribonucleotide)m = (deoxyribonucleotide)n+m + AMP + beta-nicotinamide D-nucleotide.. In terms of biological role, DNA ligase that catalyzes the formation of phosphodiester linkages between 5'-phosphoryl and 3'-hydroxyl groups in double-stranded DNA using NAD as a coenzyme and as the energy source for the reaction. It is essential for DNA replication and repair of damaged DNA. In Microcystis aeruginosa (strain NIES-843 / IAM M-2473), this protein is DNA ligase.